We begin with the raw amino-acid sequence, 445 residues long: CBL-interacting protein kinase 3 (445 aa).

The 256-residue stretch at 19 to 274 (YELGRAIGQG…TSQVLQDQWF (256 aa)) folds into the Protein kinase domain. Residues 25 to 33 (IGQGTFAKV) and Lys-48 contribute to the ATP site. Asp-142 serves as the catalytic Proton acceptor. The interval 160 to 189 (DFGLSAISEQVKADGLLHTTCGTPNYVAPE) is activation loop. The region spanning 309–336 (AMEEQPTLMNAFELISLNKGLNLDNFFE) is the NAF domain. Residues 342 to 371 (KRETRFTSQCPPKEIINRIEEAANLLGFNI) are PPI.

This sequence belongs to the protein kinase superfamily. CAMK Ser/Thr protein kinase family. SNF1 subfamily. It depends on Mn(2+) as a cofactor.

The enzyme catalyses L-seryl-[protein] + ATP = O-phospho-L-seryl-[protein] + ADP + H(+). It carries out the reaction L-threonyl-[protein] + ATP = O-phospho-L-threonyl-[protein] + ADP + H(+). Functionally, CIPK serine-threonine protein kinases interact with CBL proteins. Binding of a CBL protein to the regulatory NAF domain of CIPK protein lead to the activation of the kinase in a calcium-dependent manner. The chain is CBL-interacting protein kinase 3 (CIPK3) from Oryza sativa subsp. japonica (Rice).